Here is a 2774-residue protein sequence, read N- to C-terminus: Microtubule-associated protein 1A (2774 aa).

Phosphoserine is present on residues S114, S117, S118, S121, and S155. Residue Y177 is modified to Phosphotyrosine. The disordered stretch occupies residues 310–329 (PSKIKHRADSKESLKAAPKT). Phosphoserine is present on residues S319 and S322. The stretch at 336-338 (KRE) is repeat 1. Residues 336 to 541 (KREEVLEEGA…TQDFEELKRE (206 aa)) are 11 X 3 AA repeats of K-K-[DE]. The segment covering 342 to 390 (EEGAKEARSELAKELAKTEKKAKEPSEKPPEKPSKSERVRGESSEALKA) has biased composition (basic and acidic residues). 9 disordered regions span residues 342–718 (EEGA…SFLS), 737–808 (TIPG…TELT), 845–939 (EDQS…VGKE), 957–1078 (FGAP…QTGC), 1093–1344 (ETGE…ILPE), 1357–1646 (QKDG…SPEQ), 1693–1725 (ESTF…KDFQ), 1739–1843 (LAES…VPFS), and 1861–2644 (AELE…LVNG). S384 carries the phosphoserine modification. Residues 391 to 406 (EKRRLIKDKAGKKHLK) show a composition bias toward basic residues. 2 stretches are compositionally biased toward basic and acidic residues: residues 407–464 (EKIS…KPDL) and 484–500 (VKVD…ELSS). 9 consecutive repeat copies span residues 415–417 (KKD), 420–422 (KKE), 424–426 (KKE), 427–429 (RKE), 431–433 (KKE), 436–438 (RKE), 440–442 (KKD), 444–446 (KKD), and 449–451 (RKD). At T504 the chain carries Phosphothreonine. Positions 506-516 (PAQKGAAPPAA) are enriched in low complexity. 2 positions are modified to phosphoserine: S526 and S527. 2 stretches are compositionally biased toward basic and acidic residues: residues 536 to 554 (EELK…DTGL) and 584 to 595 (EGEHVEREKEVV). The stretch at 539-541 (KRE) is repeat 11. 2 positions are modified to phosphoserine: S604 and S611. Basic and acidic residues-rich tracts occupy residues 614–631 (EVEK…REAE) and 638–675 (AARE…ETKA). A Phosphoserine modification is found at S643. A Phosphothreonine modification is found at T663. Phosphoserine is present on residues S666, S677, S690, and S785. 2 stretches are compositionally biased toward polar residues: residues 845–858 (EDQS…PQTE) and 869–881 (TVTS…TEAT). Phosphoserine is present on residues S872, S875, S876, and S889. T892 bears the Phosphothreonine mark. Phosphoserine occurs at positions 894, 898, 907, 980, 990, 998, 1007, 1013, 1022, 1029, 1037, 1061, 1132, 1134, 1148, 1160, 1178, 1188, 1191, 1197, 1206, and 1209. Residues 1008–1028 (PVEDKSEPRDFQEDSWGETKH) are compositionally biased toward basic and acidic residues. Polar residues predominate over residues 1142 to 1157 (SVLSVVSPDTTKQEAT). Polar residues predominate over residues 1180–1190 (EDTQSLSFSEE). Positions 1198–1212 (LDISSKQLSPESLGT) are enriched in polar residues. Positions 1220 to 1236 (LGKEERGPVMKAEDDSC) are enriched in basic and acidic residues. Residues S1252, S1280, S1301, S1304, and S1307 each carry the phosphoserine modification. Low complexity predominate over residues 1293–1308 (TSDSSLTKSPESLSSP). 5 stretches are compositionally biased toward basic and acidic residues: residues 1317 to 1336 (WEGK…ETRQ), 1357 to 1409 (QKDG…EDQG), 1416 to 1428 (AEKD…RDTD), 1436 to 1479 (EPRD…EHSI), and 1487 to 1574 (RAPD…KADS). Phosphoserine is present on residues S1504, S1568, S1574, and S1594. Over residues 1599 to 1613 (SKAREQEKKYWKEQD) the composition is skewed to basic and acidic residues. 7 positions are modified to phosphoserine: S1622, S1643, S1715, S1742, S1757, S1763, and S1767. Residues 1707 to 1718 (TPLQHTPRSPWT) show a composition bias toward polar residues. A Phosphothreonine modification is found at T1772. 2 positions are modified to phosphoserine: S1778 and S1784. Over residues 1789–1803 (TESTAPMRNEPTTPS) the composition is skewed to polar residues. Residues 1818 to 1839 (LPPAPLSPAPAPPTPAPEPHTP) are compositionally biased toward pro residues. The segment covering 1873–1885 (KDYRKAEGEREGE) has biased composition (basic and acidic residues). S1897 is modified (phosphoserine). A compositionally biased stretch (basic and acidic residues) spans 1908 to 1930 (ATRDTEQTEPEQREPTPYPDERS). The residue at position 1923 (T1923) is a Phosphothreonine. The span at 1984–1997 (SSPASPQNLQSDTP) shows a compositional bias: polar residues. A Phosphoserine modification is found at S1988. Over residues 2008–2034 (AVPPRQEPDPGPNVEPSITPPAVPPRA) the composition is skewed to pro residues. T2026 is subject to Phosphothreonine. S2043 and S2077 each carry phosphoserine. Residues 2055-2092 (PDRRTPSPKETGRGHWDDGTNDSDLEKGAREQPEKETR) are compositionally biased toward basic and acidic residues. Residues 2115 to 2125 (SSLSSDSHLGS) show a composition bias toward low complexity. Residues 2144–2153 (PAPPQLPSPA) show a composition bias toward pro residues. Residues S2204, S2221, S2225, S2228, S2229, and S2260 each carry the phosphoserine modification. The segment covering 2226-2237 (EGSSSEATTPVI) has biased composition (polar residues). Positions 2271–2287 (DLTPLSPAPSASLDLAP) are enriched in low complexity. A compositionally biased stretch (pro residues) spans 2288-2298 (APAPAPAPAPG). Residues 2299–2309 (LPGDLGDGTLP) show a composition bias toward low complexity. The span at 2352–2364 (AEKEEAEAPHAWE) shows a compositional bias: basic and acidic residues. S2424 is modified (phosphoserine). Positions 2477–2489 (SASDSGSSQSDSD) are enriched in low complexity. The span at 2534-2550 (DPPPTPLPDPRPSPPRP) shows a compositional bias: pro residues. Residues 2565–2575 (GRVERLREKGR) are compositionally biased toward basic and acidic residues. The span at 2613-2623 (RTVPRPRSTPS) shows a compositional bias: low complexity. Residues S2620 and S2635 each carry the phosphoserine modification.

The protein belongs to the MAP1 family. In terms of assembly, 3 different light chains, LC1 (a cleavage product of MAP1B), LC2 (a cleavage product of MAP1A) and LC3 (produced by one of the MAP1LC3 genes), can associate with the MAP1A or MAP1B heavy chains. Interacts with guanylate kinase-like domain of DLG1, DLG2 and DLG4. Binds to CSNK1D. Interacts with TIAM2. Interacts with ELAVL4. Post-translationally, phosphorylated by CSNK1D. In terms of processing, LC2 is generated from MAP1A by proteolytic processing. It is free to associate with both MAP1A and MAP1B. As to expression, brain, heart and muscle.

It is found in the cytoplasm. It localises to the cytoskeleton. Structural protein involved in the filamentous cross-bridging between microtubules and other skeletal elements. The chain is Microtubule-associated protein 1A (Map1a) from Rattus norvegicus (Rat).